The chain runs to 123 residues: Protein LLP homolog (123 aa).

The segment covering Met-1 to Asn-21 has biased composition (basic residues). Disordered regions lie at residues Met-1 to Pro-23 and Lys-55 to Trp-123. The span at Asp-70 to His-89 shows a compositional bias: basic and acidic residues. A compositionally biased stretch (basic residues) spans Gln-100–Trp-123.

It belongs to the learning-associated protein family.

It localises to the nucleus. The protein localises to the nucleolus. It is found in the chromosome. Functionally, regulates dendritic and spine growth and synaptic transmission. The protein is Protein LLP homolog (llph) of Xenopus tropicalis (Western clawed frog).